A 602-amino-acid polypeptide reads, in one-letter code: Elongation factor 4 (602 aa).

Residues D5–K187 enclose the tr-type G domain. Residues D17–T22 and N134–D137 each bind GTP.

This sequence belongs to the TRAFAC class translation factor GTPase superfamily. Classic translation factor GTPase family. LepA subfamily.

The protein resides in the cell inner membrane. The enzyme catalyses GTP + H2O = GDP + phosphate + H(+). Functionally, required for accurate and efficient protein synthesis under certain stress conditions. May act as a fidelity factor of the translation reaction, by catalyzing a one-codon backward translocation of tRNAs on improperly translocated ribosomes. Back-translocation proceeds from a post-translocation (POST) complex to a pre-translocation (PRE) complex, thus giving elongation factor G a second chance to translocate the tRNAs correctly. Binds to ribosomes in a GTP-dependent manner. This Zymomonas mobilis subsp. mobilis (strain ATCC 31821 / ZM4 / CP4) protein is Elongation factor 4.